The chain runs to 281 residues: UPF0046 protein C25E10.12 (281 aa).

Belongs to the UPF0046 family.

This is UPF0046 protein C25E10.12 from Caenorhabditis elegans.